A 21-amino-acid polypeptide reads, in one-letter code: Peptide PGLa-R2 (21 aa).

Leu-21 carries the post-translational modification Leucine amide.

Expressed by the skin glands.

It localises to the secreted. Its function is as follows. Antimicrobial peptide. This chain is Peptide PGLa-R2, found in Xenopus ruwenzoriensis (Uganda clawed frog).